A 232-amino-acid chain; its full sequence is LexA repressor (232 aa).

Positions 26-46 (FDEMKDALDLRSKSGIHRLIT) form a DNA-binding region, H-T-H motif. Residues Ser-153 and Lys-191 each act as for autocatalytic cleavage activity in the active site.

The protein belongs to the peptidase S24 family. Homodimer.

The enzyme catalyses Hydrolysis of Ala-|-Gly bond in repressor LexA.. Represses a number of genes involved in the response to DNA damage (SOS response), including recA and lexA. In the presence of single-stranded DNA, RecA interacts with LexA causing an autocatalytic cleavage which disrupts the DNA-binding part of LexA, leading to derepression of the SOS regulon and eventually DNA repair. This is LexA repressor from Bradyrhizobium sp. (strain BTAi1 / ATCC BAA-1182).